The chain runs to 311 residues: tRNA-cytidine(32) 2-sulfurtransferase (311 aa).

The PP-loop motif signature appears at 47–52 (SGGKDS). [4Fe-4S] cluster-binding residues include Cys122, Cys125, and Cys213.

It belongs to the TtcA family. In terms of assembly, homodimer. Mg(2+) is required as a cofactor. Requires [4Fe-4S] cluster as cofactor.

It is found in the cytoplasm. It catalyses the reaction cytidine(32) in tRNA + S-sulfanyl-L-cysteinyl-[cysteine desulfurase] + AH2 + ATP = 2-thiocytidine(32) in tRNA + L-cysteinyl-[cysteine desulfurase] + A + AMP + diphosphate + H(+). The protein operates within tRNA modification. In terms of biological role, catalyzes the ATP-dependent 2-thiolation of cytidine in position 32 of tRNA, to form 2-thiocytidine (s(2)C32). The sulfur atoms are provided by the cysteine/cysteine desulfurase (IscS) system. This chain is tRNA-cytidine(32) 2-sulfurtransferase, found in Enterobacter sp. (strain 638).